The primary structure comprises 614 residues: MTTVVNLPRDPNTLSNYNNWVSTHITANFDILFDQRKLAGNVIHRFRSTTDGESNHIILDTNHLDIGSVKVNGQPSEWEYLPRLEPYGTPLKIKLDQGVKLNETIEVDISVQTTEKCTALQWLTPAQTSNKKHPYMFSQCQAIHARSIFPCQDTPDVKCTLDFNITSPLPVIASGLPVRGSSEAPKSDGKTLYKFHQKVPIPSYLFALASGDISEAPIGPRSVVATSPDKLGECQWELEADTEKFINAIEKIVYPYVWGEYNVLILPPSFPYGGMENPIFTFATPSIISKDRENIDVIAHELAHSWSGNLVTNASWEHFWLNEGWTTYLERRLRHGEPYRHFSAIIGWKALTDSVEHFGPEHDFTKLITNLKGMDPDDAFSSIPYEKGFNFLFHLENLVGKSKFDRFIPHYFNKYKGKSLDSYEFKSTILDFFKDDSDASTALNELDWDSWFYAPGLPPKPDFDTSLVDVVYDLAKKWLSLPKSSFKPQPEDIRGLTANQVVVFLEQILVSERQLTPELSKLMGEIYGLAASQNIEVANLYFQVGLQAGDASVVEPTADLLGKIGRMKFVRPLYRKLAKFDRKRALDTFEKHKGFYHPICRAMVEKDLFGKKDE.

A peptide-binding positions include 139–141 (QCQ) and 271–276 (PYGGME). Residue H300 coordinates Zn(2+). E301 functions as the Proton acceptor in the catalytic mechanism. Zn(2+) contacts are provided by H304 and E323. Catalysis depends on Y385, which acts as the Proton donor.

This sequence belongs to the peptidase M1 family. Zn(2+) is required as a cofactor.

It localises to the cytoplasm. The protein resides in the nucleus. The catalysed reaction is an epoxide + H2O = an ethanediol. In terms of biological role, aminopeptidase that preferentially cleaves di- and tripeptides. Also has low epoxide hydrolase activity (in vitro). Can hydrolyze the epoxide leukotriene LTA(4) but it forms preferentially 5,6-dihydroxy-7,9,11,14-eicosatetraenoic acid rather than the cytokine leukotriene B(4) as the product compared to the homologous mammalian enzyme (in vitro). In Aspergillus fumigatus (strain ATCC MYA-4609 / CBS 101355 / FGSC A1100 / Af293) (Neosartorya fumigata), this protein is Leucine aminopeptidase 2.